Here is a 323-residue protein sequence, read N- to C-terminus: GDP-mannose 4,6-dehydratase (323 aa).

Residues 11–14 (TGQD), arginine 36, 59–60 (DM), and 81–85 (LAAQS) each bind NADP(+). Threonine 126 is a catalytic residue. Residues glutamate 128 and tyrosine 150 each act as nucleophile in the active site. NADP(+)-binding residues include lysine 154, histidine 180, and arginine 185.

Belongs to the NAD(P)-dependent epimerase/dehydratase family. GDP-mannose 4,6-dehydratase subfamily. Homotetramer. The cofactor is NADP(+).

It carries out the reaction GDP-alpha-D-mannose = GDP-4-dehydro-alpha-D-rhamnose + H2O. The protein operates within bacterial outer membrane biogenesis; lipopolysaccharide biosynthesis. Its function is as follows. Catalyzes the conversion of GDP-D-mannose to GDP-4-dehydro-6-deoxy-D-mannose. This is GDP-mannose 4,6-dehydratase from Pseudomonas aeruginosa (strain ATCC 15692 / DSM 22644 / CIP 104116 / JCM 14847 / LMG 12228 / 1C / PRS 101 / PAO1).